Reading from the N-terminus, the 57-residue chain is Large ribosomal subunit protein bL32 (57 aa).

This sequence belongs to the bacterial ribosomal protein bL32 family.

The sequence is that of Large ribosomal subunit protein bL32 from Lysinibacillus sphaericus (strain C3-41).